Reading from the N-terminus, the 349-residue chain is DNA fragmentation factor subunit beta (349 aa).

Residues 7–83 enclose the CIDE-N domain; sequence QPKCVKLRAL…LLTAGETWHG (77 aa). A disordered region spans residues 319–349; sequence RSRIYRPQTGSRRKQPPRKQPPRKRPPRKRQ. Residues 329 to 349 are compositionally biased toward basic residues; the sequence is SRRKQPPRKQPPRKRPPRKRQ.

As to quaternary structure, heterodimer of DFFA and DFFB. Interacts with H1-1.

Its subcellular location is the cytoplasm. It is found in the nucleus. Its activity is regulated as follows. Inhibited by DFFA (DFF45). Its function is as follows. Nuclease that induces DNA fragmentation and chromatin condensation during apoptosis. Degrades naked DNA and induces apoptotic morphology. This chain is DNA fragmentation factor subunit beta (Dffb), found in Rattus norvegicus (Rat).